Reading from the N-terminus, the 56-residue chain is Large ribosomal subunit protein bL32 (56 aa).

A compositionally biased stretch (basic residues) spans 1 to 16 (MAVQKSKKSRSMRGMR). A disordered region spans residues 1 to 21 (MAVQKSKKSRSMRGMRRSHDA).

Belongs to the bacterial ribosomal protein bL32 family.

This Vibrio atlanticus (strain LGP32) (Vibrio splendidus (strain Mel32)) protein is Large ribosomal subunit protein bL32.